Consider the following 114-residue polypeptide: Iron-sulfur cluster insertion protein ErpA (114 aa).

Iron-sulfur cluster-binding residues include C42, C106, and C108.

It belongs to the HesB/IscA family. As to quaternary structure, homodimer. Iron-sulfur cluster is required as a cofactor.

In terms of biological role, required for insertion of 4Fe-4S clusters for at least IspG. This is Iron-sulfur cluster insertion protein ErpA from Wigglesworthia glossinidia brevipalpis.